The sequence spans 60 residues: LKCHKLVPPFWKTCPEGKNLCYKMYMVATPMLPVKRGCIDVCPKDSALVKYMCCNTNKCN.

Cystine bridges form between C3–C21, C14–C38, C42–C53, and C54–C59.

This sequence belongs to the three-finger toxin family. Short-chain subfamily. Type IA cytotoxin sub-subfamily. As to quaternary structure, monomer in solution; Homodimer and oligomer in the presence of negatively charged lipids forming a pore with a size ranging between 20 and 30 Angstroms. In terms of tissue distribution, expressed by the venom gland.

It is found in the secreted. The protein localises to the target cell membrane. Shows cytolytic activity on many different cells by forming pore in lipid membranes. In vivo, increases heart rate or kills the animal by cardiac arrest. In addition, it binds to heparin with high affinity, interacts with Kv channel-interacting protein 1 (KCNIP1) in a calcium-independent manner, and binds to integrin alpha-V/beta-3 (ITGAV/ITGB3) with moderate affinity. This is Cytotoxin 6 from Naja annulifera (Banded Egyptian cobra).